Reading from the N-terminus, the 288-residue chain is Heme oxygenase 1 (288 aa).

The Cytoplasmic portion of the chain corresponds to 1–265; it reads MERPQPDSMP…KTPLNTHSQA (265 aa). The heme b site is built by Lys-18, His-25, Tyr-134, and Arg-183. Positions 223–260 are disordered; sequence HDTKDQSPSRAPGLRQRASNKAQDSAPVETPRGKTPLN. Phosphoserine is present on Ser-229. A helical; Anchor for type IV membrane protein membrane pass occupies residues 266–288; that stretch reads PLLRWVLTLSFLVATVAVGLYAM.

It belongs to the heme oxygenase family. In terms of assembly, homodimer and higher order homooligomer. Oligomerization is crucial for its stability and function in the endoplasmic reticulum. Interacts with FLVCR2; this interaction is potentiated in the presence of heme. Post-translationally, a soluble form arises by proteolytic removal of the membrane anchor.

The protein resides in the endoplasmic reticulum membrane. The enzyme catalyses heme b + 3 reduced [NADPH--hemoprotein reductase] + 3 O2 = biliverdin IXalpha + CO + Fe(2+) + 3 oxidized [NADPH--hemoprotein reductase] + 3 H2O + H(+). In terms of biological role, catalyzes the oxidative cleavage of heme at the alpha-methene bridge carbon, released as carbon monoxide (CO), to generate biliverdin IXalpha, while releasing the central heme iron chelate as ferrous iron. Affords protection against programmed cell death and this cytoprotective effect relies on its ability to catabolize free heme and prevent it from sensitizing cells to undergo apoptosis. Functionally, catalyzes the oxidative cleavage of heme at the alpha-methene bridge carbon, released as carbon monoxide (CO), to generate biliverdin IXalpha, while releasing the central heme iron chelate as ferrous iron. The chain is Heme oxygenase 1 (HMOX1) from Pongo abelii (Sumatran orangutan).